A 1128-amino-acid polypeptide reads, in one-letter code: Adipocyte enhancer-binding protein 1 (1128 aa).

Residues M1–P25 form the signal peptide. Residues G40–E368 are disordered. Residues P77–G109 are compositionally biased toward basic and acidic residues. Basic residues predominate over residues P113–A163. 2 stretches are compositionally biased toward polar residues: residues R178 to G187 and T198 to E209. Residues R249–R261 are compositionally biased toward basic residues. Composition is skewed to basic and acidic residues over residues P267–P282 and E327–E363. One can recognise an F5/8 type C domain in the interval I375 to C532. Residues M382–V547 are required for DNA-binding and interaction with NFKBIA. 2 interaction with MAPK1 and MAPK3 regions span residues A413–M616 and D998–F1128. N-linked (GlcNAc...) asparagine glycosylation occurs at N520. The interval V547–S977 is interaction with PTEN. Positions R555–V896 constitute a Peptidase M14 domain. The segment at D933–F1128 is required for transcriptional repression. A disordered region spans residues L1027–S1056. Over residues L1030 to L1044 the composition is skewed to low complexity.

It belongs to the peptidase M14 family. As to quaternary structure, interacts with different types of collagen, including collagens I, III, and V. Interacts with GNG5, NFKBIA, MAPK1, MAPK3 and PTEN. May interact with calmodulin. Interaction with MAPK1 may stimulate DNA-binding. Binds to DNA in vitro. Post-translationally, phosphorylated by MAPK1 in vitro. Expressed in aorta.

It localises to the secreted. As a positive regulator of collagen fibrillogenesis, it is probably involved in the organization and remodeling of the extracellular matrix. May positively regulate MAP-kinase activity in adipocytes, leading to enhanced adipocyte proliferation and reduced adipocyte differentiation. May also positively regulate NF-kappa-B activity in macrophages by promoting the phosphorylation and subsequent degradation of I-kappa-B-alpha (NFKBIA), leading to enhanced macrophage inflammatory responsiveness. Can act as a transcriptional repressor. This is Adipocyte enhancer-binding protein 1 (Aebp1) from Rattus norvegicus (Rat).